The primary structure comprises 456 residues: SWI/SNF complex component SNF12 homolog (456 aa).

One can recognise an SWIB/MDM2 domain in the interval 234–310 (HVPQKYKVLG…PQLLREHLSP (77 aa)). Positions 435-456 (KQTTPNPTPQQISMAPSTPQTP) are disordered.

The protein belongs to the SMARCD family. Part of a SWI-SNF complex.

The protein resides in the nucleus. In terms of biological role, involved in transcriptional activation and repression of select genes by chromatin remodeling (alteration of DNA-nucleosome topology). The protein is SWI/SNF complex component SNF12 homolog (snf12-1) of Dictyostelium discoideum (Social amoeba).